Consider the following 688-residue polypeptide: PTS system glucoside-specific EIICBA component (688 aa).

The PTS EIIC type-1 domain maps to K3 to D427. Helical transmembrane passes span I12–F32, L81–M101, L137–L157, F182–W202, L223–I243, A284–I304, V315–P335, F340–L360, L364–G384, and L395–I415. One can recognise a PTS EIIB type-1 domain in the interval A438 to K519. Catalysis depends on C460, which acts as the Phosphocysteine intermediate; for EIIB activity. The PTS EIIA type-1 domain occupies D560–N664. Catalysis depends on H612, which acts as the Tele-phosphohistidine intermediate; for EIIA activity.

The protein resides in the cell membrane. The phosphoenolpyruvate-dependent sugar phosphotransferase system (sugar PTS), a major carbohydrate active -transport system, catalyzes the phosphorylation of incoming sugar substrates concomitantly with their translocation across the cell membrane. This system is involved in alpha- and beta-glucoside transport. This Staphylococcus aureus (strain Mu3 / ATCC 700698) protein is PTS system glucoside-specific EIICBA component (glcB).